We begin with the raw amino-acid sequence, 418 residues long: Putative O-antigen transporter (418 aa).

The next 11 membrane-spanning stretches (helical) occupy residues 8–28 (VWNLFGYAIPTLIAIPSLGFL), 37–57 (FGVYTIAIALVGYAGIFDVGL), 85–105 (FLVLFSCFGAFLLLIFSDGIV), 124–144 (LLAICIPLFILNQLWSAILEG), 165–185 (IPAIFVFYSATLSAAVAGLIF), 217–237 (LFFFGGWMTVSNIISPVMVYF), 251–271 (VAFYSAPAEVILKLGIIPAAI), 297–317 (LLMFLICLPVIIIGLLYSGLV), 334–354 (LNVLLIGFFFNALAMIPFSAI), 362–382 (ITALIHCAELVPYLALLYFMV), and 385–405 (YGLLGAAISWSIRVILDALLL).

It belongs to the polysaccharide synthase family.

The protein localises to the cell inner membrane. It participates in bacterial outer membrane biogenesis; lipopolysaccharide biosynthesis. Could be an O-antigen transporter. The protein is Putative O-antigen transporter (rfbE) of Shigella flexneri.